Here is a 501-residue protein sequence, read N- to C-terminus: L-lysine transport protein (501 aa).

13 helical membrane passes run 25-41 (LIAL…IFSI), 52-76 (GAML…HVLA), 92-113 (VGLG…SVIA), 138-155 (FVSA…FGVV), 174-191 (ILPL…GFSW), 214-232 (GIMV…ASVY), 247-269 (VIGF…GVLT), 292-316 (WGAA…QMLC), 340-362 (GAAW…IFFL), 377-393 (LYLV…VMLA), 424-440 (LIVG…LFYA), 447-463 (LFGA…YVWT), and 477-495 (IGVV…IGLV).

The protein belongs to the amino acid-polyamine-organocation (APC) superfamily. Basic amino acid/polyamine antiporter (APA) (TC 2.A.3.2) family.

The protein resides in the cell membrane. In terms of biological role, permease that is involved in the transport across the membrane of lysine. This is L-lysine transport protein (lysI) from Corynebacterium glutamicum (strain ATCC 13032 / DSM 20300 / JCM 1318 / BCRC 11384 / CCUG 27702 / LMG 3730 / NBRC 12168 / NCIMB 10025 / NRRL B-2784 / 534).